The chain runs to 874 residues: MKSAEIREAFLGFFEEQGHTRVPSSSLIPGNDPTLLFTNAGMNQFKDCFLGQEKRAYTRAVTSQKCVRAGGKHNDLENVGYTARHHTFFEMLGNFSFGDYFKRDAITYAWTFLTSEKWLNLPKEKLWVTVYATDDEAYDIWTKEIGVPAERMVRIGDNKGAPYASDNFWTMGDTGPCGPCSEIFFDHGADIWGGPPGSPEEDGDRYIEIWNNVFMQFNRTADGVLHPLPAPSVDTGMGLERVSAVLQHVHSNYEIDLFQSLLTASANAIGCSNDNQASLKVVADHIRSCGFLIADGVLPSSEGRGYVLRRIIRRACRHGNKLGAKGSFFYQIVAALVAEMGSAFPELVQQQSHIERVLRGEEEQFAKTLEQGLKIIEQDLAELKGTVVPGEIVFKLYDTYGFPMDLTGDIARERNLTLDEEGFEREMEAQRVRARSASSFGMDYNSLVKVDVATQFTGYSATTGSASVVALYKDGQSVTHLNAGEEGVVILDTTPFYAESGGQIGDSGFLLAGDARFDVSDTTKTGGAFLHHGVVASGSLSVGVQVETQVADEVRDATKLNHSATHLLHAALRQVLGEHVQQKGSLVDSQRLRFDFSHFESIKPEQLRALEDIVNAEIRKNTPVVTEETDIDTAKKKGAMALFGEKYGDSVRVLSMGGEFSVELCGGIHASRTGDISLFKIVSEGGVAAGVRRIEAVTGAAALAWLNSAEDQLKEAATLVKGNRDNLLDKLTAVLERNRLLEKQLEQLQAKAASAAGDDLSSAALDVKGVKVLATRLDGQDGKALLALVDQLKNKLGRAVILLGSVHEDKVVLVAGVTKDLTGQLKAGDLMKQAATAVGGKGGGRPDMAQGGGVDATALDSALALAVPFVEQGI.

Positions 562, 566, 665, and 669 each coordinate Zn(2+).

It belongs to the class-II aminoacyl-tRNA synthetase family. The cofactor is Zn(2+).

It is found in the cytoplasm. The enzyme catalyses tRNA(Ala) + L-alanine + ATP = L-alanyl-tRNA(Ala) + AMP + diphosphate. Catalyzes the attachment of alanine to tRNA(Ala) in a two-step reaction: alanine is first activated by ATP to form Ala-AMP and then transferred to the acceptor end of tRNA(Ala). Also edits incorrectly charged Ser-tRNA(Ala) and Gly-tRNA(Ala) via its editing domain. This Pseudomonas syringae pv. tomato (strain ATCC BAA-871 / DC3000) protein is Alanine--tRNA ligase.